Consider the following 208-residue polypeptide: MIGWLHGTIGDRWQEGNRCWLLLICGPVGYELQVSESLWRGTALESPTTVHTHLQQREDGQQLYGFETKADRNLFRLLISVNGVGPQVALGLISGLGAVSLLQAMAAEDVKVLCQAPGVGKRTAERLSLEWRSRLQERWQQQGGSTPLRLVEPVAESRELRATLEALGYGPEEVSAAVAQAGSQGLDPEQPMEEWLRHCLAWLSRQAG.

Residues 1–67 are domain I; sequence MIGWLHGTIG…EDGQQLYGFE (67 aa). Positions 68–146 are domain II; the sequence is TKADRNLFRL…ERWQQQGGST (79 aa). A flexible linker region spans residues 147-157; the sequence is PLRLVEPVAES. The segment at 157-208 is domain III; that stretch reads SRELRATLEALGYGPEEVSAAVAQAGSQGLDPEQPMEEWLRHCLAWLSRQAG.

Belongs to the RuvA family. In terms of assembly, homotetramer. Forms an RuvA(8)-RuvB(12)-Holliday junction (HJ) complex. HJ DNA is sandwiched between 2 RuvA tetramers; dsDNA enters through RuvA and exits via RuvB. An RuvB hexamer assembles on each DNA strand where it exits the tetramer. Each RuvB hexamer is contacted by two RuvA subunits (via domain III) on 2 adjacent RuvB subunits; this complex drives branch migration. In the full resolvosome a probable DNA-RuvA(4)-RuvB(12)-RuvC(2) complex forms which resolves the HJ.

It is found in the cytoplasm. Its function is as follows. The RuvA-RuvB-RuvC complex processes Holliday junction (HJ) DNA during genetic recombination and DNA repair, while the RuvA-RuvB complex plays an important role in the rescue of blocked DNA replication forks via replication fork reversal (RFR). RuvA specifically binds to HJ cruciform DNA, conferring on it an open structure. The RuvB hexamer acts as an ATP-dependent pump, pulling dsDNA into and through the RuvAB complex. HJ branch migration allows RuvC to scan DNA until it finds its consensus sequence, where it cleaves and resolves the cruciform DNA. The chain is Holliday junction branch migration complex subunit RuvA from Synechococcus sp. (strain RCC307).